A 104-amino-acid polypeptide reads, in one-letter code: MQKIRRDDEIIVIAGKDKGKRGKVLKVLADDRLVVGGINLVKRHTKPNPMSGVQGGIVEKEAPLHASNVAIFNGATNKADRVGFKVEDGKKIRVFKSTQKAVDA.

The protein belongs to the universal ribosomal protein uL24 family. As to quaternary structure, part of the 50S ribosomal subunit.

Functionally, one of two assembly initiator proteins, it binds directly to the 5'-end of the 23S rRNA, where it nucleates assembly of the 50S subunit. One of the proteins that surrounds the polypeptide exit tunnel on the outside of the subunit. This chain is Large ribosomal subunit protein uL24, found in Pseudomonas savastanoi pv. phaseolicola (strain 1448A / Race 6) (Pseudomonas syringae pv. phaseolicola (strain 1448A / Race 6)).